A 434-amino-acid polypeptide reads, in one-letter code: Pre-mRNA-splicing factor PRP46 (434 aa).

7 WD repeats span residues 120-160 (GHTG…LKIT), 163-202 (GHVM…AIRD), 205-244 (GHLS…EIMV), 247-288 (GHKS…KVLT), 290-329 (HSRN…TNFQ), 331-369 (QNTG…KYQS), and 380-419 (ESER…TEDT).

Belongs to the WD repeat PRL1/PRL2 family. Associated with the spliceosome.

Its subcellular location is the cytoplasm. It localises to the nucleus. Functionally, involved in pre-mRNA splicing and required for cell cycle progression at G2/M. This is Pre-mRNA-splicing factor PRP46 (PRP46) from Kluyveromyces lactis (strain ATCC 8585 / CBS 2359 / DSM 70799 / NBRC 1267 / NRRL Y-1140 / WM37) (Yeast).